Consider the following 545-residue polypeptide: MPSASWEDLAADKRARLEKSIPDEWKFKSVPIEGSVIDLPEKSGILSPSEIKITNSSATELVAQLANGTLKSVDVTLAFCKRAALAHQLVNCAHDFFPELALAQARELDRYFETHKKPVGPLHGLPISLKDQLRVKGTETCMAYISWLGKRDTSDSILTALLRKAGAVFLVKTSVPQTLMVCETVNNIIGRTSNPRNLNLSCGGSSGGEGAMIAMRGGAIGIGTDIGGSIRVPAAFNSLYGIRPSHGRLPYGGMTNSMEGQETIHSVVGPIAHSAQDVRLFLQSVLKEEPWKYDSKVIPLPWREAEENAAQAKIAEKSLNFAFYDFDGVVRPHPPITRGVEIVRSTLEKDGHTVAPWTPYKHAFAVDLANKIYAADGSTDVYKHINASGEPAIPNIKDLMNPNLPKADLNEVWDAQLQKWRYQCEYLDKWREWEERTGKELDAIIAPVAATAAVRHNQFRYYGYATVFNVLDYTSVVVPVTYADKAVDHRLADYQPVSDMDKAVYAEYDPEVYHGAPVAVQIIGRRLSEERTLAIAEYVGKLLGH.

Catalysis depends on charge relay system residues K130 and S205. S229 acts as the Acyl-ester intermediate in catalysis.

It belongs to the amidase family.

The catalysed reaction is a monocarboxylic acid amide + H2O = a monocarboxylate + NH4(+). It carries out the reaction acetamide + H2O = acetate + NH4(+). Functionally, allows acetamide to be used as a sole carbon or nitrogen source. The sequence is that of Acetamidase (amdS) from Aspergillus oryzae (strain ATCC 42149 / RIB 40) (Yellow koji mold).